The primary structure comprises 225 residues: Ribulose-phosphate 3-epimerase (225 aa).

Residue Ser-9 participates in substrate binding. Residues His-34, Asp-36, and His-68 each coordinate a divalent metal cation. The active-site Proton acceptor is Asp-36. Substrate-binding positions include His-68, 144–147 (GFGG), 177–179 (DGG), and 199–200 (GS). Asp-177 serves as a coordination point for a divalent metal cation. The active-site Proton donor is Asp-177.

This sequence belongs to the ribulose-phosphate 3-epimerase family. It depends on a divalent metal cation as a cofactor.

The enzyme catalyses D-ribulose 5-phosphate = D-xylulose 5-phosphate. The protein operates within carbohydrate degradation. In terms of biological role, catalyzes the reversible epimerization of D-ribulose 5-phosphate to D-xylulose 5-phosphate. In Escherichia coli O157:H7, this protein is Ribulose-phosphate 3-epimerase.